Consider the following 428-residue polypeptide: Ribosome biogenesis protein WDR12 homolog (428 aa).

A ubiquitin-like (UBL) domain region spans residues 13-97 (LQVHFTTKQK…EDTIELEYVE (85 aa)). 7 WD repeats span residues 109–146 (LHDD…KLTI), 148–190 (GHVA…NTAE), 197–236 (GHER…DKGE), 259–297 (GHRE…IKTE), 299–338 (TGNK…GNFV), 344–384 (GHSQ…APIF), and 388–426 (GHED…DNTK).

This sequence belongs to the WD repeat WDR12/YTM1 family.

The protein localises to the nucleus. It is found in the nucleolus. It localises to the nucleoplasm. Required for maturation of ribosomal RNAs and formation of the large ribosomal subunit. The polypeptide is Ribosome biogenesis protein WDR12 homolog (Anopheles gambiae (African malaria mosquito)).